A 374-amino-acid chain; its full sequence is CC-adding tRNA nucleotidyltransferase (374 aa).

A CTP-binding site is contributed by 39-42 (GAVR). The Mg(2+) site is built by aspartate 52 and aspartate 54. CTP contacts are provided by residues 126-127 (RD), asparagine 131, 171-180 (DASRLVRAAR), and arginine 209.

The protein belongs to the tRNA nucleotidyltransferase/poly(A) polymerase family. The cofactor is Mg(2+).

It catalyses the reaction a tRNA precursor + 2 CTP = a tRNA with a 3' CC end + 2 diphosphate. TRNA nucleotidyltransferase involved in the synthesis of the tRNA CCA terminus. Adds the two cytidine residues to tRNA. The polypeptide is CC-adding tRNA nucleotidyltransferase (Deinococcus radiodurans (strain ATCC 13939 / DSM 20539 / JCM 16871 / CCUG 27074 / LMG 4051 / NBRC 15346 / NCIMB 9279 / VKM B-1422 / R1)).